Here is a 147-residue protein sequence, read N- to C-terminus: Phospholipase A2 inhibitor subunit A (147 aa).

The region spanning 62 to 143 (EICRQAGGRI…DDNLLVVCEF (82 aa)) is the C-type lectin domain. Disulfide bonds link C64–C141 and C119–C133. An N-linked (GlcNAc...) asparagine glycan is attached at N103.

It belongs to the alpha-type phospholipase A2 inhibitor family. As to quaternary structure, homotrimer; non-covalently linked. In terms of processing, glycosylated. In terms of tissue distribution, expressed by the liver.

The protein localises to the secreted. In terms of biological role, inhibits the enzymatic activity of the acidic phospholipase A2 (PLA2). This chain is Phospholipase A2 inhibitor subunit A, found in Gloydius brevicaudus siniticus (Chinese mamushi).